The following is a 61-amino-acid chain: Small ribosomal subunit protein uS14 (61 aa).

Residues C24, C27, C40, and C43 each coordinate Zn(2+).

It belongs to the universal ribosomal protein uS14 family. Zinc-binding uS14 subfamily. Part of the 30S ribosomal subunit. Contacts proteins S3 and S10. Requires Zn(2+) as cofactor.

Its function is as follows. Binds 16S rRNA, required for the assembly of 30S particles and may also be responsible for determining the conformation of the 16S rRNA at the A site. In Campylobacter curvus (strain 525.92), this protein is Small ribosomal subunit protein uS14.